The following is a 284-amino-acid chain: D-tagatose-1,6-bisphosphate aldolase subunit GatY (284 aa).

The active-site Proton donor is the Asp82. Residues His83 and His180 each contribute to the Zn(2+) site. Gly181 is a dihydroxyacetone phosphate binding site. His208 is a binding site for Zn(2+). Residues Gly209–Ser211 and Asn230–Thr233 contribute to the dihydroxyacetone phosphate site.

Belongs to the class II fructose-bisphosphate aldolase family. TagBP aldolase GatY subfamily. As to quaternary structure, forms a complex with GatZ. The cofactor is Zn(2+).

The catalysed reaction is D-tagatofuranose 1,6-bisphosphate = D-glyceraldehyde 3-phosphate + dihydroxyacetone phosphate. It functions in the pathway carbohydrate metabolism; D-tagatose 6-phosphate degradation; D-glyceraldehyde 3-phosphate and glycerone phosphate from D-tagatose 6-phosphate: step 2/2. Catalytic subunit of the tagatose-1,6-bisphosphate aldolase GatYZ, which catalyzes the reversible aldol condensation of dihydroxyacetone phosphate (DHAP or glycerone-phosphate) with glyceraldehyde 3-phosphate (G3P) to produce tagatose 1,6-bisphosphate (TBP). Requires GatZ subunit for full activity and stability. Is involved in the catabolism of galactitol. In Salmonella newport (strain SL254), this protein is D-tagatose-1,6-bisphosphate aldolase subunit GatY.